We begin with the raw amino-acid sequence, 345 residues long: MFGGLKNFIKEKSEALAGIHRESDESCGFRVLKVENDSKAYNARIESYYDFITAVNGILLNGDPSMFMALLRDSSPEVTLEVFSLKGQITRKVNIKINSDEKIGMVLQWASIAPAVDAIWHILNVIDDSPVARASLVPYEDYIVGTPEGMMTGEKALSDLIESHLNRPLRLYIYNHYRDSTRQVTIVPNRHWGGNGAIGCGVGHGVLHRLPAPLSGPPPQPGDIVFSNPMLGGPDHKVSQPSETENFLPTPEPPKIASANAGSSNEISIPHYQRHKKSHKGAIQDSSIQSYLDEEEKLSRELDHKTKDASSTNDSQTTPLPPPPPVAVNSTNDESAPQNEELVKN.

2 PDZ GRASP-type domains span residues 27 to 112 (CGFR…WASI) and 118 to 207 (AIWH…HGVL). Residues 27–223 (CGFRVLKVEN…LSGPPPQPGD (197 aa)) form a GRASP region. The interval 229 to 345 (PMLGGPDHKV…APQNEELVKN (117 aa)) is disordered. The span at 297–308 (KLSRELDHKTKD) shows a compositional bias: basic and acidic residues. 2 stretches are compositionally biased toward polar residues: residues 309–318 (ASSTNDSQTT) and 328–338 (VNSTNDESAPQ).

The protein localises to the golgi apparatus membrane. This is an uncharacterized protein from Schizosaccharomyces pombe (strain 972 / ATCC 24843) (Fission yeast).